The following is a 368-amino-acid chain: GDSL esterase/lipase At4g16230 (368 aa).

The first 24 residues, Met1–Ala24, serve as a signal peptide directing secretion. Catalysis depends on Ser37, which acts as the Nucleophile. Asn117 and Asn286 each carry an N-linked (GlcNAc...) asparagine glycan. Catalysis depends on residues Asp329 and His332.

The protein belongs to the 'GDSL' lipolytic enzyme family.

The protein localises to the secreted. This chain is GDSL esterase/lipase At4g16230, found in Arabidopsis thaliana (Mouse-ear cress).